A 253-amino-acid chain; its full sequence is Phosphoribosylaminoimidazole-succinocarboxamide synthase (253 aa).

It belongs to the SAICAR synthetase family.

It carries out the reaction 5-amino-1-(5-phospho-D-ribosyl)imidazole-4-carboxylate + L-aspartate + ATP = (2S)-2-[5-amino-1-(5-phospho-beta-D-ribosyl)imidazole-4-carboxamido]succinate + ADP + phosphate + 2 H(+). It participates in purine metabolism; IMP biosynthesis via de novo pathway; 5-amino-1-(5-phospho-D-ribosyl)imidazole-4-carboxamide from 5-amino-1-(5-phospho-D-ribosyl)imidazole-4-carboxylate: step 1/2. The sequence is that of Phosphoribosylaminoimidazole-succinocarboxamide synthase from Parvibaculum lavamentivorans (strain DS-1 / DSM 13023 / NCIMB 13966).